The sequence spans 144 residues: Large ribosomal subunit protein uL15 (144 aa).

The interval 1–57 is disordered; the sequence is MELNNLKPAEGSKHAKRRVGRGIGSGLGKTAGRGHKGQKSRSGGFHKVGFEGGQMPL. Residues 21–31 are compositionally biased toward gly residues; the sequence is RGIGSGLGKTA.

The protein belongs to the universal ribosomal protein uL15 family. As to quaternary structure, part of the 50S ribosomal subunit.

Its function is as follows. Binds to the 23S rRNA. The protein is Large ribosomal subunit protein uL15 of Paraburkholderia phytofirmans (strain DSM 17436 / LMG 22146 / PsJN) (Burkholderia phytofirmans).